A 291-amino-acid chain; its full sequence is Beta-lactamase CTX-M-8 (291 aa).

Positions 1–30 (MMRHRVKRMMLMTTACISLLLGSAPLYAQA) are cleaved as a signal peptide. The active-site Nucleophile; acyl-ester intermediate is the Ser73. A beta-lactam-binding residues include Lys76, Ser133, Glu169, and Ser240.

The protein belongs to the class-A beta-lactamase family. As to quaternary structure, monomer.

Its subcellular location is the secreted. It carries out the reaction a beta-lactam + H2O = a substituted beta-amino acid. Inhibited by the beta-lactamase-blocking agents clavulanic acid, tazobactam and sulbactam; in the DH5alpha strain of E.coli. Its function is as follows. Extended-spectrum beta-lactamase (ESBL) which confers resistance to penicillins, as well as first, third and fourth-generation cephalosporins. Has cefotaxime-hydrolyzing activity. Inactive against cephalosporin antibiotic, cefoxitin, and the carbapenem, imipenem. This Citrobacter amalonaticus protein is Beta-lactamase CTX-M-8.